The following is a 136-amino-acid chain: Small ribosomal subunit protein uS9 (136 aa).

It belongs to the universal ribosomal protein uS9 family.

This chain is Small ribosomal subunit protein uS9, found in Synechococcus sp. (strain JA-2-3B'a(2-13)) (Cyanobacteria bacterium Yellowstone B-Prime).